Consider the following 529-residue polypeptide: GSFELTILHTNDVHARLEQTSRDSGKCTGEDCYGGVARRATKIRQIRASHRNVLLLDAGDQYQGTIWFNYYKGREVVHFMNSLRYDAMALGNHEFDNGLNGLLDPLLKNVKFPILSANIRPKGPIASNISGYILPYKIINVGSEKVGIIGYTTKETPVLSNPGPYLEFRDEVEELQKHADKLTTLGVNKIIALGHSGFMEDCRIAQKVKGVDVVVGGHTNTFLYTGSPPSNEVAAGNYPFMQLSDDGRQVPVVQAYAFGKYLGYLNVTFDDKGKVIKASGNPILLNKSIQEDPAVKAEISRMKVQLQNYSSQEIGRTIVYLNGTTHACRFHECNLGNLICDAVVYNNLRHPDDNEWNHVSMCIVNGGGIRSPIDEQANNGIITLEELTAVLPFGGTFDLLQIKGSTLRQAFEHSVHRHGQGTGELLQVSGIKVVYDLSQKPGKRVVSLNVLCTECRVPTYVPLEMEKTYKVLLPSFLAAGGDGYYMLKGDSSNHSSGDLDISIVGDYIKRMGKVFPAMEGRMVFSAGSL.

A signal peptide is located at residue Gly-1. Positions 12 and 14 each coordinate Zn(2+). Cys-27 and Cys-32 are joined by a disulfide. Residues Asp-60, Asn-92, His-195, and His-218 each contribute to the Zn(2+) site. Asn-308 and Asn-322 each carry an N-linked (GlcNAc...) asparagine glycan. 2 disulfide bridges follow: Cys-328/Cys-333 and Cys-340/Cys-362. Arg-329 provides a ligand contact to AMP. AMP contacts are provided by Asn-365, Arg-370, and Phe-393. An intrachain disulfide couples Cys-452 to Cys-455. Residues Phe-476 and Asp-482 each coordinate AMP. A lipid anchor (GPI-anchor amidated serine) is attached at Ser-525. Positions 526 to 529 (AGSL) are cleaved as a propeptide — removed in mature form.

Belongs to the 5'-nucleotidase family. Zn(2+) serves as cofactor. Venom 5'-nucleotidases (or a part thereof) may be released into the venom via exosome-like vesicles. They may be attached via a GPI anchor to the membrane of these vesicles. Soluble forms of 5'-nucleotidase might be released by cleavage of the ectodomain in the exosome-like vesicles or venom gland cells. Expressed by the venom gland.

It localises to the membrane. The enzyme catalyses a ribonucleoside 5'-phosphate + H2O = a ribonucleoside + phosphate. Hydrolyzes nucleotides into nucleosides. Snake venom 5'-nucleotidases are widely distributed among venomous snake taxa, but there is a lack of information about their biological activities. They have been shown to inhibit platelet aggregation. This effect may be due to the liberation of inhibitory AMP or adenosine by its action on ADP released upon initiation of aggregation. Venom 5'-nucleotidases are also known to synergistically act in vivo with other toxins like ADPases, phospholipases, and disintegrins to exert a more pronounced anti-coagulant effect. This is Snake venom 5'-nucleotidase from Naja atra (Chinese cobra).